The chain runs to 235 residues: MSRYLKHFTVVGDDPIQWSNDYQKWENEEEDNGEKDSEIKLEPSRGHVTFQDVMKKLFSSRRFQIVIVFLVIVDALLVLGELLMDLKIIHPDKYHIAPKVFHYLSLSILTIFLVEVGFKIFVYGREFFHHKFEVLDSIVVVVSFILDLVLLFREHEFEAVGLLILLRLWRVARIINGIILSVKTRSEQQVSKLKQVNLKLATKVEQLQHSCVEKEQEIERLTRMLKQHGLLSEQT.

Residues 1–62 are Cytoplasmic-facing; that stretch reads MSRYLKHFTV…VMKKLFSSRR (62 aa). Residues 63 to 83 form a helical membrane-spanning segment; the sequence is FQIVIVFLVIVDALLVLGELL. Residues 84–100 are Extracellular-facing; the sequence is MDLKIIHPDKYHIAPKV. A helical transmembrane segment spans residues 101 to 123; that stretch reads FHYLSLSILTIFLVEVGFKIFVY. The Cytoplasmic segment spans residues 124–131; that stretch reads GREFFHHK. Residues 132-152 form a helical membrane-spanning segment; sequence FEVLDSIVVVVSFILDLVLLF. Topologically, residues 153–159 are extracellular; it reads REHEFEA. Residues 160–180 traverse the membrane as a helical segment; it reads VGLLILLRLWRVARIINGIIL. Topologically, residues 181–235 are cytoplasmic; it reads SVKTRSEQQVSKLKQVNLKLATKVEQLQHSCVEKEQEIERLTRMLKQHGLLSEQT. The stretch at 187–228 forms a coiled coil; it reads EQQVSKLKQVNLKLATKVEQLQHSCVEKEQEIERLTRMLKQH.

This sequence belongs to the hydrogen channel family. Homodimer.

The protein localises to the membrane. It localises to the cell membrane. Its function is as follows. Mediates the voltage-dependent proton permeability of excitable membranes. Forms a proton-selective channel through which protons may pass in accordance with their electrochemical gradient. In Gallus gallus (Chicken), this protein is Voltage-gated hydrogen channel 1 (HVCN1).